The following is a 729-amino-acid chain: Serine/threonine-protein kinase TBK1 (729 aa).

Residues 9 to 310 (WLLSDILGQG…ETSDVLHRMV (302 aa)) enclose the Protein kinase domain. 15 to 23 (LGQGATANV) serves as a coordination point for ATP. Residue Lys-30 forms a Glycyl lysine isopeptide (Lys-Gly) (interchain with G-Cter in ubiquitin) linkage. Residue Lys-38 coordinates ATP. The Proton acceptor role is filled by Asp-135. Position 172 is a phosphoserine; by autocatalysis and IKKB (Ser-172). Positions 309-385 (MVIHVFSLQH…ENPIFVTSRE (77 aa)) constitute a Ubiquitin-like domain. Lys-401 participates in a covalent cross-link: Glycyl lysine isopeptide (Lys-Gly) (interchain with G-Cter in ubiquitin). Coiled coils occupy residues 407-657 (DLDG…LQET) and 658-713 (LPQK…ILER). The interval 621-729 (RKMLHLRKQL…DGGLRNVDCL (109 aa)) is interaction with AZI2, TANK and TBKBP1. A Glycyl lysine isopeptide (Lys-Gly) (interchain with G-Cter in ubiquitin) cross-link involves residue Lys-670. The residue at position 716 (Ser-716) is a Phosphoserine.

This sequence belongs to the protein kinase superfamily. Ser/Thr protein kinase family. I-kappa-B kinase subfamily. As to quaternary structure, homodimer. Interacts with DDX3X, TIRAP and TRAF2. Part of a ternary complex consisting of TANK, TRAF2 and TBK1. Interacts with AZI2, TANK and TBKBP1; these interactions are mutually exclusive and mediate TBK1 activation. Interacts with GSK3B; this interaction promotes TBK1 self-association and autophosphorylation. Interacts with SIKE1; SIKE1 is associated with TBK1 under physiological condition and dissociated from TBK1 upon viral infection or TLR3 stimulation. Interacts with IRF3, leading to IRF3 phosphorylation. Interacts with RIGI. Interacts with CYLD. Interacts with OPTN and TRAF3. Interacts with SRC. Interacts with the exocyst complex subunit SEC5/EXOC2; this interaction is sufficient to trigger TBK1 activity. Interacts with STING1, leading to STING1 phosphorylation. Interacts with IFIT3 (via N-terminus). Interacts with MAVS; interaction only takes place in the presence of IFIT3 and leads to MAVS phosphorylation. Interacts (via protein kinase domain) with TTLL12 (via TTL domain); the interaction prevents MAVS binding to TBK1. Interacts with TICAM1; this interaction is enhanced in the presence of WDFY1 and leads to TICAM1 phosphorylation. Interacts with TRIM26. Interacts with TRIM23. Interacts with TTC4 and IKBKE. Interacts with HNRNPA2B1. Interacts with DDX3X. Interacts with TRIM14. Interacts with CEP170; efficient complex formation may be dependent on the presence of CCDC61. Interacts with TRAF3IP3. Interacts with HSP90AA1; the interaction mediates TBK1 association with TOMM70. Interacts with TAX1BP1. Interacts with kinase IKBKB; the complex interacts with STAT1, leading to phosphorylation of STAT1 on 'Thr-748' by IKBKB. Interacts with ICOS; this interaction is critical for the maturation of T follicular regulatory cells. Interacts with RNF144B; this interaction prevents TBK1 phosphorylation and subsequent activation. Interacts with ASB8; this interaction promotes TBK1 proteasomal degradation. Autophosphorylation at Ser-172 activates the kinase, and is an essential step for virus-triggered signaling. Phosphorylated by IKBKB/IKKB at Ser-172. Phosphorylation requires homodimerization and ubiquitination at Lys-30 and Lys-401. Dephosphorylated at Ser-172 by PPM1B and this negatively regulates its role in mediating antiviral response. In terms of processing, 'Lys-63'-linked polyubiquitination by MIB1 after RNA virus infection, or by NRDP1 after LPS stimulation at Lys-30 and Lys-401, participates in kinase activation. 'Lys-48'-linked polyubiquitination at Lys-670 by DTX4 leads to proteasomal degradation. 'Lys-48'-linked polyubiquitination by TRAIP also leads to proteasomal degradation. 'Lys-48'-linked polyubiquitination by TRAF7; leading to proteasomal degradation. 'Lys-63'-linked polyubiquitination by RNF128 at Lys-30 and Lys-401 leads to the activation of antiviral responses. 'Lys-48'-linked polyubiquitination after 'lys-33'-linked deubiquitination by USP38 promotes TBK1 degradation.

It is found in the cytoplasm. It catalyses the reaction L-seryl-[protein] + ATP = O-phospho-L-seryl-[protein] + ADP + H(+). It carries out the reaction L-threonyl-[protein] + ATP = O-phospho-L-threonyl-[protein] + ADP + H(+). With respect to regulation, kinase activity is inhibited competitively by amlexanox. Its function is as follows. Serine/threonine kinase that plays an essential role in regulating inflammatory responses to foreign agents. Following activation of toll-like receptors by viral or bacterial components, associates with TRAF3 and TANK and phosphorylates interferon regulatory factors (IRFs) IRF3 and IRF7 as well as DDX3X. This activity allows subsequent homodimerization and nuclear translocation of the IRFs leading to transcriptional activation of pro-inflammatory and antiviral genes including IFNA and IFNB. In order to establish such an antiviral state, TBK1 form several different complexes whose composition depends on the type of cell and cellular stimuli. Thus, several scaffolding molecules including FADD, TRADD, MAVS, AZI2, TANK or TBKBP1/SINTBAD can be recruited to the TBK1-containing-complexes. Plays a key role in IRF3 activation: acts by first phosphorylating innate adapter proteins MAVS, STING1 and TICAM1 on their pLxIS motif, leading to recruitment of IRF3, thereby licensing IRF3 for phosphorylation by TBK1. Under particular conditions, functions as a NF-kappa-B effector by phosphorylating NF-kappa-B inhibitor alpha/NFKBIA, IKBKB or RELA to translocate NF-Kappa-B to the nucleus. Restricts bacterial proliferation by phosphorylating the autophagy receptor OPTN/Optineurin on 'Ser-177', thus enhancing LC3 binding affinity and antibacterial autophagy. Phosphorylates SMCR8 component of the C9orf72-SMCR8 complex, promoting autophagosome maturation. Phosphorylates ATG8 proteins MAP1LC3C and GABARAPL2, thereby preventing their delipidation and premature removal from nascent autophagosomes. Seems to play a role in energy balance regulation by sustaining a state of chronic, low-grade inflammation in obesity, which leads to a negative impact on insulin sensitivity. Acts both as a positive and negative regulator of the mTORC1 complex, depending on the context: activates mTORC1 in response to growth factors by catalyzing phosphorylation of MTOR, while it limits the mTORC1 complex by promoting phosphorylation of RPTOR. Acts as a positive regulator of the mTORC2 complex by mediating phosphorylation of MTOR, leading to increased phosphorylation and activation of AKT1. Phosphorylates and activates AKT1. Involved in the regulation of TNF-induced RIPK1-mediated cell death, probably acting via CYLD phosphorylation that in turn controls RIPK1 ubiquitination status. Also participates in the differentiation of T follicular regulatory cells together with the receptor ICOS. This chain is Serine/threonine-protein kinase TBK1, found in Mus musculus (Mouse).